A 349-amino-acid chain; its full sequence is 26S proteasome non-ATPase regulatory subunit 4 (349 aa).

In terms of domain architecture, VWFA spans 5-188; the sequence is ATIVCLDNSE…LSDIILQSPI (184 aa). The region spanning 204–223 is the UIM 1 domain; sequence DTDPDLAMALKLSLEEEKQR. The span at 219–234 shows a compositional bias: basic and acidic residues; the sequence is EEKQRQERERKAREEA. Disordered regions lie at residues 219-257 and 274-349; these read EEKQ…MDVN and TDKM…NEKK. Residues 235 to 253 show a composition bias toward low complexity; the sequence is NGGSTNSGTTTTTAPTESN. Residues 259–278 form the UIM 2 domain; the sequence is EDDPELAEALALSMATDKME. Low complexity predominate over residues 280-301; that stretch reads QSSTTNTDSQPPQQQQQPPTDD. Basic and acidic residues predominate over residues 335–349; sequence LSKKDEDKDKDNEKK.

It belongs to the proteasome subunit S5A family. The 26S proteasome is composed of a core protease, known as the 20S proteasome, capped at one or both ends by the 19S regulatory complex (RC). The RC is composed of at least 18 different subunits in two subcomplexes, the base and the lid, which form the portions proximal and distal to the 20S proteolytic core, respectively.

Binds and presumably selects ubiquitin-conjugates for destruction. This chain is 26S proteasome non-ATPase regulatory subunit 4 (psmD4), found in Dictyostelium discoideum (Social amoeba).